The following is a 356-amino-acid chain: Pyrimidine monooxygenase RutA (356 aa).

FMN-binding positions include 49-50 (IK), N115, E124, 140-141 (RY), and S190.

Belongs to the NtaA/SnaA/DszA monooxygenase family. RutA subfamily.

It catalyses the reaction uracil + FMNH2 + NADH + O2 = (Z)-3-ureidoacrylate + FMN + NAD(+) + H2O + H(+). The catalysed reaction is thymine + FMNH2 + NADH + O2 = (Z)-2-methylureidoacrylate + FMN + NAD(+) + H2O + H(+). Functionally, catalyzes the pyrimidine ring opening between N-3 and C-4 by an unusual flavin hydroperoxide-catalyzed mechanism, adding oxygen atoms in the process to yield ureidoacrylate peracid, that immediately reacts with FMN forming ureidoacrylate and FMN-N(5)-oxide. The FMN-N(5)-oxide reacts spontaneously with NADH to produce FMN. Requires the flavin reductase RutF to regenerate FMN in vivo. This is Pyrimidine monooxygenase RutA from Haliangium ochraceum (strain DSM 14365 / JCM 11303 / SMP-2).